Consider the following 47-residue polypeptide: Putative glycosylation-dependent cell adhesion molecule 1 (47 aa).

The signal sequence occupies residues 1–18 (MKFFMVLLPASLASTSLA).

Belongs to the PP3/GlyCAM-1 family. As to expression, expressed in cells harvested from milk of lactating women. Not found in other tissues.

The polypeptide is Putative glycosylation-dependent cell adhesion molecule 1 (GLYCAM1) (Homo sapiens (Human)).